Reading from the N-terminus, the 376-residue chain is Alanine racemase (376 aa).

The active-site Proton acceptor; specific for D-alanine is the Lys-40. At Lys-40 the chain carries N6-(pyridoxal phosphate)lysine. Arg-138 contacts substrate. Residue Tyr-270 is the Proton acceptor; specific for L-alanine of the active site. Met-317 contacts substrate.

Belongs to the alanine racemase family. It depends on pyridoxal 5'-phosphate as a cofactor.

The enzyme catalyses L-alanine = D-alanine. It functions in the pathway amino-acid biosynthesis; D-alanine biosynthesis; D-alanine from L-alanine: step 1/1. In terms of biological role, catalyzes the interconversion of L-alanine and D-alanine. May also act on other amino acids. This is Alanine racemase (alr) from Lactobacillus delbrueckii subsp. bulgaricus (strain ATCC BAA-365 / Lb-18).